The sequence spans 253 residues: Imidazole glycerol phosphate synthase subunit HisF (253 aa).

Active-site residues include D11 and D130.

This sequence belongs to the HisA/HisF family. Heterodimer of HisH and HisF.

Its subcellular location is the cytoplasm. It catalyses the reaction 5-[(5-phospho-1-deoxy-D-ribulos-1-ylimino)methylamino]-1-(5-phospho-beta-D-ribosyl)imidazole-4-carboxamide + L-glutamine = D-erythro-1-(imidazol-4-yl)glycerol 3-phosphate + 5-amino-1-(5-phospho-beta-D-ribosyl)imidazole-4-carboxamide + L-glutamate + H(+). The protein operates within amino-acid biosynthesis; L-histidine biosynthesis; L-histidine from 5-phospho-alpha-D-ribose 1-diphosphate: step 5/9. In terms of biological role, IGPS catalyzes the conversion of PRFAR and glutamine to IGP, AICAR and glutamate. The HisF subunit catalyzes the cyclization activity that produces IGP and AICAR from PRFAR using the ammonia provided by the HisH subunit. The sequence is that of Imidazole glycerol phosphate synthase subunit HisF from Desulfitobacterium hafniense (strain DSM 10664 / DCB-2).